The chain runs to 306 residues: Agmatinase (306 aa).

Mn(2+) contacts are provided by histidine 128, aspartate 151, histidine 153, aspartate 155, aspartate 232, and aspartate 234.

The protein belongs to the arginase family. Agmatinase subfamily. Mn(2+) serves as cofactor.

The catalysed reaction is agmatine + H2O = urea + putrescine. It participates in amine and polyamine biosynthesis; putrescine biosynthesis via agmatine pathway; putrescine from agmatine: step 1/1. In terms of biological role, catalyzes the formation of putrescine from agmatine. The sequence is that of Agmatinase (speB) from Proteus mirabilis.